The chain runs to 299 residues: Endonuclease G, mitochondrial (299 aa).

Residues 1–48 constitute a mitochondrion transit peptide; sequence MQLLRAGLTLALGAGLGAAAESWWRQRADARATPGLLSRLPVLPVAAA. A Phosphothreonine modification is found at Thr130. Catalysis depends on His143, which acts as the Proton acceptor. Position 174 (Asn174) interacts with Mg(2+). The interval 288-298 is essential for deoxyribonuclease activity; the sequence is AGSLKAITAGS. At Ser290 the chain carries Phosphoserine.

Belongs to the DNA/RNA non-specific endonuclease family. Homodimer; disulfide-linked. Homodimerization is essential for its activity. Interacts with YWHAG. It depends on Mg(2+) as a cofactor. Post-translationally, GSK3-beta-mediated dual phosphorylations at Thr-130 and Ser-290 is necessary for its interaction with YWHAG and the induction of autophagy.

The protein resides in the mitochondrion. In terms of biological role, endonuclease that preferentially catalyzes the cleavage of double-stranded 5-hydroxymethylcytosine (5hmC)-modified DNA. The 5hmC-modified nucleotide does not increase the binding affinity, but instead increases the efficiency of cutting and specifies the site of cleavage for the modified DNAs. Shows significantly higher affinity for four- stranded Holliday junction over duplex and single-stranded DNAs. Promotes conservative recombination when the DNA is 5hmC-modified. Promotes autophagy through the suppression of mTOR by its phosphorylation-mediated interaction with YWHAG and its endonuclease activity-mediated DNA damage response. GSK3-beta mediated phosphorylation of ENDOG enhances its interaction with YWHAG, leading to the release of TSC2 and PIK3C3 from YWHAG resulting in mTOR pathway suppression and autophagy initiation. Promotes cleavage of mtDNA in response to oxidative and nitrosative stress, in turn inducing compensatory mtDNA replication. The chain is Endonuclease G, mitochondrial (ENDOG) from Bos taurus (Bovine).